Reading from the N-terminus, the 285-residue chain is Probable endonuclease 4 (285 aa).

Positions 67, 107, 144, 178, 181, 215, 228, 230, and 260 each coordinate Zn(2+).

The protein belongs to the AP endonuclease 2 family. The cofactor is Zn(2+).

It catalyses the reaction Endonucleolytic cleavage to 5'-phosphooligonucleotide end-products.. Its function is as follows. Endonuclease IV plays a role in DNA repair. It cleaves phosphodiester bonds at apurinic or apyrimidinic (AP) sites, generating a 3'-hydroxyl group and a 5'-terminal sugar phosphate. The sequence is that of Probable endonuclease 4 from Chloroflexus aurantiacus (strain ATCC 29366 / DSM 635 / J-10-fl).